The chain runs to 269 residues: Ubiquinone/menaquinone biosynthesis C-methyltransferase UbiE (269 aa).

S-adenosyl-L-methionine is bound by residues T92, D113, and 141–142 (NA).

This sequence belongs to the class I-like SAM-binding methyltransferase superfamily. MenG/UbiE family.

It catalyses the reaction a 2-demethylmenaquinol + S-adenosyl-L-methionine = a menaquinol + S-adenosyl-L-homocysteine + H(+). The catalysed reaction is a 2-methoxy-6-(all-trans-polyprenyl)benzene-1,4-diol + S-adenosyl-L-methionine = a 5-methoxy-2-methyl-3-(all-trans-polyprenyl)benzene-1,4-diol + S-adenosyl-L-homocysteine + H(+). It participates in quinol/quinone metabolism; menaquinone biosynthesis; menaquinol from 1,4-dihydroxy-2-naphthoate: step 2/2. It functions in the pathway cofactor biosynthesis; ubiquinone biosynthesis. In terms of biological role, methyltransferase required for the conversion of demethylmenaquinol (DMKH2) to menaquinol (MKH2) and the conversion of 2-polyprenyl-6-methoxy-1,4-benzoquinol (DDMQH2) to 2-polyprenyl-3-methyl-6-methoxy-1,4-benzoquinol (DMQH2). The protein is Ubiquinone/menaquinone biosynthesis C-methyltransferase UbiE of Brucella suis (strain ATCC 23445 / NCTC 10510).